Here is a 1042-residue protein sequence, read N- to C-terminus: SWI/SNF-related matrix-associated actin-dependent regulator of chromatin subfamily A member 1 (1042 aa).

Residues 25 to 82 are disordered; it reads EDEQPGPSTSQEEGAAAAATEATAATEKGEKKKEKNVSSFQLKLAAKAPKSEKEMDPE. Residues 36 to 50 show a composition bias toward low complexity; sequence EEGAAAAATEATAAT. Composition is skewed to basic and acidic residues over residues 51 to 60 and 73 to 82; these read EKGEKKKEKN and PKSEKEMDPE. Serine 116 and serine 119 each carry phosphoserine. The 166-residue stretch at 195-360 folds into the Helicase ATP-binding domain; sequence ISLYENGVNG…WALLNFLLPD (166 aa). 208–215 contributes to the ATP binding site; that stretch reads DEMGLGKT. The DEAH box motif lies at 311–314; that stretch reads DEAH. Residues 490–641 form the Helicase C-terminal domain; it reads VLDKLLAKLK…SIVIQQGRLI (152 aa). Residues lysine 650, lysine 716, and lysine 738 each participate in a glycyl lysine isopeptide (Lys-Gly) (interchain with G-Cter in SUMO2) cross-link. The interval 819–849 is disordered; that stretch reads EQKKIDGAEPLTPEETEEKEKLLTQGFTNWT. Residues 828 to 837 show a composition bias toward basic and acidic residues; sequence PLTPEETEEK. The region spanning 843–895 is the SANT 1 domain; sequence QGFTNWTKRDFNQFIKANEKYGRDDIDNIAREVEGKSPEEVMEYSAVFWERCN. Tyrosine 942 carries the phosphotyrosine modification. Positions 946–1010 constitute an SANT 2 domain; it reads KGKNYTEEED…QRRCNTLISL (65 aa).

Belongs to the SNF2/RAD54 helicase family. ISWI subfamily. In terms of assembly, may form homodimers. Component of the ACF-1 ISWI chromatin remodeling complex at least composed of SMARCA1 and BAZ1A, which regulates the spacing of histone octamers on the DNA template to facilitate access to DNA. Within the complex interacts with BAZ1A; the interaction is direct. Component of the WICH-1 ISWI chromatin remodeling complex at least composed of SMARCA1 and BAZ1B/WSTF. Within the complex interacts with BAZ1B/WSTF. Component of the NoRC-1 ISWI chromatin remodeling complex at least composed of SMARCA1 and BAZ2A/TIP5. Within the complex interacts with BAZ2A/TIP5. Component of the BRF-1 ISWI chromatin remodeling complex at least composed of SMARCA1 and BAZ2B. Within the complex interacts with BAZ2B. Component of the NURF-1 ISWI chromatin remodeling complex (also called the nucleosome-remodeling factor (NURF) complex) at least composed of SMARCA1, BPTF, RBBP4 and RBBP7. Within the complex interacts with BPTF. Within the complex interacts with RBBP4 and RBBP7. Component of the CERF-1 ISWI chromatin remodeling complex (also called the CECR2-containing-remodeling factor (CERF) complex) at least composed of CECR2 and SMARCA1. LUZP1 is detected as part of the CERF-1 complex in embryonic stem cells where it is involved in complex stabilization but is not detected in the complex in the testis. Component of the RSF-1 ISWI chromatin remodeling complex at least composed of SMARCA1 and RSF1. Within the complex interacts with RSF1. Interacts with PRLR. Interacts with ERCC6. May form homodimers. Component of the BPFT-SMARCA1 complex at least composed of SMARCA1, BPFT, RBBP4 and RBBP7; the complex is catalytically inactive and does not remodel chromatin. Within the complex interacts with BPTF, RBBP4 and RBBP7. Component of the BAZ1A-1-SMARCA1 complex at least composed of SMARCA1 and BAZ1A; the complex is catalytically inactive and does not remodel chromatin. Component of the BAZ1B-1-SMARCA1 complex at least composed of SMARCA1 and BAZ1B; the complex is catalytically inactive and does not remodel chromatin. As to expression, expressed in lung, breast, kidney, ovary, skeletal muscle and brain. In terms of tissue distribution, mainly expressed in non-neuronal tissues such as lung, breast, kidney, and ovary.

The protein localises to the nucleus. It is found in the chromosome. It carries out the reaction ATP + H2O = ADP + phosphate + H(+). Functionally, ATPase that possesses intrinsic ATP-dependent chromatin-remodeling activity. ATPase activity is substrate-dependent, and is increased when nucleosomes are the substrate, but is also catalytically active when DNA alone is the substrate. Catalytic subunit of ISWI chromatin-remodeling complexes, which form ordered nucleosome arrays on chromatin and facilitate access to DNA during DNA-templated processes such as DNA replication, transcription, and repair. Within the ISWI chromatin-remodeling complexes, slides edge- and center-positioned histone octamers away from their original location on the DNA template. Catalytic activity and histone octamer sliding propensity is regulated and determined by components of the ISWI chromatin-remodeling complexes. The BAZ1A-, BAZ1B-, BAZ2A- and BAZ2B-containing ISWI chromatin-remodeling complexes regulate the spacing of nucleosomes along the chromatin and have the ability to slide mononucleosomes to the center of a DNA template. The CECR2- and RSF1-containing ISWI chromatin-remodeling complexes do not have the ability to slide mononucleosomes to the center of a DNA template. Within the NURF-1 and CERF-1 ISWI chromatin remodeling complexes, nucleosomes are the preferred substrate for its ATPase activity. Within the NURF-1 ISWI chromatin-remodeling complex, binds to the promoters of En1 and En2 to positively regulate their expression and promote brain development. May promote neurite outgrowth. May be involved in the development of luteal cells. Facilitates nucleosome assembly during DNA replication, ensuring replication fork progression and genomic stability by preventing replication stress and nascent DNA gaps. In terms of biological role, catalytically inactive when either DNA or nucleosomes are the substrate and does not possess chromatin-remodeling activity. Acts as a negative regulator of chromatin remodelers by generating inactive complexes. The chain is SWI/SNF-related matrix-associated actin-dependent regulator of chromatin subfamily A member 1 from Homo sapiens (Human).